Consider the following 197-residue polypeptide: UPF0251 protein CT1277 (197 aa).

Residues 138 to 197 (GGGFGGGRRGGGKCRGFRSGLDRGPGHGEGRCQGEGHGNGNGNGNGQGRMRRNQQEGGEV) are disordered. A compositionally biased stretch (basic and acidic residues) spans 157-171 (GLDRGPGHGEGRCQG). A compositionally biased stretch (gly residues) spans 172-184 (EGHGNGNGNGNGQ).

Belongs to the UPF0251 family.

The chain is UPF0251 protein CT1277 from Chlorobaculum tepidum (strain ATCC 49652 / DSM 12025 / NBRC 103806 / TLS) (Chlorobium tepidum).